A 675-amino-acid chain; its full sequence is DNA ligase (675 aa).

NAD(+) contacts are provided by residues D35–D39, S84–L85, and E116. Residue K118 is the N6-AMP-lysine intermediate of the active site. NAD(+) contacts are provided by R139, E180, K296, and K320. The Zn(2+) site is built by C414, C417, C432, and C437. In terms of domain architecture, BRCT spans P597–M675.

It belongs to the NAD-dependent DNA ligase family. LigA subfamily. Mg(2+) is required as a cofactor. It depends on Mn(2+) as a cofactor.

It catalyses the reaction NAD(+) + (deoxyribonucleotide)n-3'-hydroxyl + 5'-phospho-(deoxyribonucleotide)m = (deoxyribonucleotide)n+m + AMP + beta-nicotinamide D-nucleotide.. Functionally, DNA ligase that catalyzes the formation of phosphodiester linkages between 5'-phosphoryl and 3'-hydroxyl groups in double-stranded DNA using NAD as a coenzyme and as the energy source for the reaction. It is essential for DNA replication and repair of damaged DNA. In Syntrophobacter fumaroxidans (strain DSM 10017 / MPOB), this protein is DNA ligase.